Consider the following 231-residue polypeptide: Uridylate kinase (231 aa).

9 to 12 (KLSG) is an ATP binding site. Gly49 contributes to the UMP binding site. ATP is bound by residues Gly50 and Arg54. UMP is bound by residues Asp69 and 130–137 (AGMPYFST). ATP is bound by residues Asn158, Tyr164, and Asp167.

This sequence belongs to the UMP kinase family. As to quaternary structure, homohexamer.

The protein resides in the cytoplasm. It carries out the reaction UMP + ATP = UDP + ADP. It functions in the pathway pyrimidine metabolism; CTP biosynthesis via de novo pathway; UDP from UMP (UMPK route): step 1/1. Inhibited by UTP. In terms of biological role, catalyzes the reversible phosphorylation of UMP to UDP. The sequence is that of Uridylate kinase from Tropheryma whipplei (strain Twist) (Whipple's bacillus).